The following is a 319-amino-acid chain: NAP1-binding protein (319 aa).

The span at 34–43 (SALRSRRKQM) shows a compositional bias: basic residues. Residues 34 to 74 (SALRSRRKQMRPTGKSVLKRPRKVTDRKTEEKIRTNRRKTP) form a disordered region. The span at 56–67 (KVTDRKTEEKIR) shows a compositional bias: basic and acidic residues. Phosphoserine occurs at positions 251 and 260. The interval 278-319 (EMQPLQENISPACPTPPYRSRETEKEDETLSPISVDFSSYLS) is disordered.

As to quaternary structure, interacts with NDC1 and MPS2.

This Saccharomyces cerevisiae (strain ATCC 204508 / S288c) (Baker's yeast) protein is NAP1-binding protein (NBP1).